A 183-amino-acid polypeptide reads, in one-letter code: Gene BABR protein 2 (183 aa).

This is Gene BABR protein 2 from Babesia bovis.